An 875-amino-acid polypeptide reads, in one-letter code: Cytosolic phospholipase A2 epsilon (875 aa).

The interval 16 to 70 (THASEGHHGLGTSMLVPKNPQGEEDSKLGRNCSGFEDAQDPQTAVPSSPLLSMAS) is disordered. Residues 60–183 (VPSSPLLSMA…CLRNKTHVKF (124 aa)) enclose the C2 domain. Residues 61–70 (PSSPLLSMAS) are compositionally biased toward low complexity. Ca(2+)-binding residues include Asp-97, Asp-103, Asp-153, Asp-155, and Asp-161. The region spanning 332 to 875 (PCSDTLDVRL…KKRMRSQCPS (544 aa)) is the PLA2c domain. Ser-420 (nucleophile) is an active-site residue. Catalysis depends on Asp-708, which acts as the Proton acceptor. Ser-808 carries the phosphoserine modification. The interval 865–875 (EKKRMRSQCPS) is required for localization at membrane structures.

Ca(2+) is required as a cofactor. As to expression, predominantly expressed in brain, heart, skeletal muscle, testis and thyroid. Expressed in neurons but not astrocytes or microglia. Expressed at lower level in stomach.

It is found in the cytoplasm. The protein resides in the cytosol. Its subcellular location is the early endosome membrane. It localises to the lysosome membrane. The protein localises to the cell membrane. It catalyses the reaction a 1,2-diacyl-sn-glycero-3-phosphoethanolamine + a 1,2-diacyl-sn-glycero-3-phosphocholine = an N-acyl-1,2-diacyl-sn-glycero-3-phosphoethanolamine + a 2-acyl-sn-glycero-3-phosphocholine + H(+). The enzyme catalyses 1-hexadecanoyl-2-octadecanoyl-sn-glycero-3-phosphocholine + 1,2-di-(9Z-octadecenoyl)-sn-glycero-3-phosphoethanolamine = 2-octadecanoyl-sn-glycero-3-phosphocholine + N-hexadecanoyl-1,2-di-(9Z-octadecenoyl)-sn-glycero-3-phosphoethanolamine + H(+). The catalysed reaction is 1-octadecanoyl-2-hexadecanoyl-sn-glycero-3-phosphocholine + 1,2-di-(9Z-octadecenoyl)-sn-glycero-3-phosphoethanolamine = N-octadecanoyl-1,2-di-(9Z-octadecenoyl)-sn-glycero-3-phosphoethanolamine + 2-hexadecanoyl-sn-glycero-3-phosphocholine + H(+). It carries out the reaction 1,2-di-(9Z-octadecenoyl)-sn-glycero-3-phosphoethanolamine + 1,2-dihexadecanoyl-sn-glycero-3-phosphocholine = N-hexadecanoyl-1,2-di-(9Z-octadecenoyl)-sn-glycero-3-phosphoethanolamine + 2-hexadecanoyl-sn-glycero-3-phosphocholine + H(+). It catalyses the reaction 1,2-di-(5Z,8Z,11Z,14Z-eicosatetraenoyl)-sn-glycero-3-phosphocholine + 1,2-di-(9Z-octadecenoyl)-sn-glycero-3-phosphoethanolamine = N-(5Z,8Z,11Z,14Z-eicosatetraenoyl)-1,2-di-(9Z-octadecenoyl)-sn-glycero-3-phosphoethanolamine + 2-(5Z,8Z,11Z,14Z)-eicosatetraenoyl-sn-glycero-3-phosphocholine + H(+). The enzyme catalyses 2 1,2-di-(9Z-octadecenoyl)-sn-glycero-3-phosphoethanolamine = N,1,2-tri-(9Z-octadecenoyl)-sn-glycero-3-phosphoethanolamine + 2-(9Z-octadecenoyl)-sn-glycero-3-phosphoethanolamine + H(+). The catalysed reaction is a 1,2-diacyl-sn-glycero-3-phosphocholine + H2O = a 1-acyl-sn-glycero-3-phosphocholine + a fatty acid + H(+). It carries out the reaction 1-(1Z-octadecenyl)-2-(9Z-octadecenoyl)-sn-glycero-3-phosphoethanolamine + 1,2-dihexadecanoyl-sn-glycero-3-phosphocholine = 1-O-(1Z-octadecenoyl)-2-(9Z-octadecenoyl)-sn-glycero-3-phospho-N-hexadecanoyl-ethanolamine + 2-hexadecanoyl-sn-glycero-3-phosphocholine + H(+). It catalyses the reaction 1-hexadecanoyl-2-(5Z,8Z,11Z,14Z-eicosatetraenoyl)-sn-glycero-3-phosphocholine + H2O = 1-hexadecanoyl-sn-glycero-3-phosphocholine + (5Z,8Z,11Z,14Z)-eicosatetraenoate + H(+). The enzyme catalyses 1-hexadecanoyl-sn-glycero-3-phosphocholine + H2O = sn-glycerol 3-phosphocholine + hexadecanoate + H(+). Its activity is regulated as follows. Stimulated by cytosolic Ca(2+). Stimulated by anionic phospholipids such as phosphatidylserine. In terms of biological role, calcium-dependent N-acyltransferase involved in the biosynthesis of N-acyl ethanolamines (NAEs) in the brain. Transfers the sn-1 fatty acyl chain of phosphatidylcholine (fatty acyl donor) to the amine group of phosphatidylethanolamine (fatty acyl acceptor) to generate N-acyl phosphatidylethanolamine (NAPE). Similarly can use plasmenylethanolamine as a fatty acyl acceptor to form N-acyl plasmenylethanolamine (N-Acyl-PlsEt). Both NAPE and N-Acyl-PlsEt can serve as precursors of bioactive NAEs like N-arachidonoyl phosphatidylethanolamine also called anandamide. Has weak phospholipase A2 and lysophospholipase activities. Regulates intracellular membrane trafficking that requires modulation of membrane curvature as it occurs by enrichment in lysophospholipids. Promotes tubule formation involved in clathrin-independent endocytotic trafficking and cargo recycling. The chain is Cytosolic phospholipase A2 epsilon (Pla2g4e) from Mus musculus (Mouse).